Here is a 402-residue protein sequence, read N- to C-terminus: Zinc finger protein 809 (402 aa).

The region spanning 4–75 (VSFEDVAVDF…AEASSRSLPG (72 aa)) is the KRAB domain. A disordered region spans residues 118–139 (QEVSKGTTSRHRRAPVKSLCRK). Basic residues predominate over residues 125–139 (TSRHRRAPVKSLCRK). C2H2-type zinc fingers lie at residues 155–178 (YECKDCEKVFCNNSTLIKHYRRTH), 184–206 (YECDECSKMYYWKSDLTSHQKTH), 213–235 (YECSECGKAFFRKSHLNAHERTH), 241–263 (YECTECRKAFYYKSDLTRHKKTH), 269–291 (FKCEECKKAFSRKSKLAIHQKKH), 297–319 (YECTECKKAFSHQSQLTAHRIAH), and 325–347 (YECKECNKSFHWKCQLTAHQKRH).

Belongs to the krueppel C2H2-type zinc-finger protein family.

It localises to the nucleus. Transcription factor specifically required to repress retrotransposons in embryonic stem cells. Recognizes and binds retroviral DNA sequences from a large subset of mammalian retroviruses and retroelements and repress their expression by recruiting a repressive complex containing TRIM28/KAP1. The protein is Zinc finger protein 809 of Mus musculus (Mouse).